The following is a 232-amino-acid chain: MGQKINPIGLRLGINRTWDSRWYAGKNEYGKLLHEDVKIREILHKELKQAAVARIVIERPHKKCRVTIHSARPGVVIGKKGADIDKLRKKVADITASDVVINIVEIRKPELDATLVAESIAQQLERRVAFRRAMKRAVQSAMRLGAEGIRINCSGRLGGAEIARMEWYREGRVPLHTLRADIDYGVATAFTTFGTCGVKVWIFKGEILEHDPMAQDKRMAEGDNSRPRRDAA.

Positions 39 to 107 (IREILHKELK…DVVINIVEIR (69 aa)) constitute a KH type-2 domain.

Belongs to the universal ribosomal protein uS3 family. Part of the 30S ribosomal subunit. Forms a tight complex with proteins S10 and S14.

Functionally, binds the lower part of the 30S subunit head. Binds mRNA in the 70S ribosome, positioning it for translation. This chain is Small ribosomal subunit protein uS3, found in Rhodopseudomonas palustris (strain BisB18).